A 602-amino-acid chain; its full sequence is Elongation factor 4 (602 aa).

The tr-type G domain occupies asparagine 2–arginine 184. GTP is bound by residues aspartate 14–threonine 19 and asparagine 131–aspartate 134.

Belongs to the TRAFAC class translation factor GTPase superfamily. Classic translation factor GTPase family. LepA subfamily.

It localises to the cell inner membrane. It catalyses the reaction GTP + H2O = GDP + phosphate + H(+). Functionally, required for accurate and efficient protein synthesis under certain stress conditions. May act as a fidelity factor of the translation reaction, by catalyzing a one-codon backward translocation of tRNAs on improperly translocated ribosomes. Back-translocation proceeds from a post-translocation (POST) complex to a pre-translocation (PRE) complex, thus giving elongation factor G a second chance to translocate the tRNAs correctly. Binds to ribosomes in a GTP-dependent manner. The chain is Elongation factor 4 from Acidovorax ebreus (strain TPSY) (Diaphorobacter sp. (strain TPSY)).